Reading from the N-terminus, the 298-residue chain is Cytidine deaminase (298 aa).

CMP/dCMP-type deaminase domains are found at residues 47–167 and 186–298; these read TEQQ…FGPS and DSDD…PLLG. 88–90 contributes to the substrate binding site; sequence NLE. His-101 is a Zn(2+) binding site. Catalysis depends on Glu-103, which acts as the Proton donor. 2 residues coordinate Zn(2+): Cys-128 and Cys-131.

This sequence belongs to the cytidine and deoxycytidylate deaminase family. Homodimer. The cofactor is Zn(2+).

The enzyme catalyses cytidine + H2O + H(+) = uridine + NH4(+). The catalysed reaction is 2'-deoxycytidine + H2O + H(+) = 2'-deoxyuridine + NH4(+). In terms of biological role, this enzyme scavenges exogenous and endogenous cytidine and 2'-deoxycytidine for UMP synthesis. The sequence is that of Cytidine deaminase from Shewanella frigidimarina (strain NCIMB 400).